We begin with the raw amino-acid sequence, 108 residues long: MTSIIYSPKDIFEQEFKTSMRGFDKKEVDEFLDNVIKDYENFNAQIEALKAENEALKKAKFQARNTVSATVQQPVPQPTRVAQSATNFDILKRISKLEKEVFGKQIIE.

A coiled-coil region spans residues 32-69 (LDNVIKDYENFNAQIEALKAENEALKKAKFQARNTVSA).

This sequence belongs to the GpsB family. Forms polymers through the coiled coil domains. Interacts with PBP1, MreC and EzrA.

Its subcellular location is the cytoplasm. Functionally, divisome component that associates with the complex late in its assembly, after the Z-ring is formed, and is dependent on DivIC and PBP2B for its recruitment to the divisome. Together with EzrA, is a key component of the system that regulates PBP1 localization during cell cycle progression. Its main role could be the removal of PBP1 from the cell pole after pole maturation is completed. Also contributes to the recruitment of PBP1 to the division complex. Not essential for septum formation. The chain is Cell cycle protein GpsB from Streptococcus pyogenes serotype M28 (strain MGAS6180).